The following is a 493-amino-acid chain: Cobyric acid synthase (493 aa).

Positions 246–440 constitute a GATase cobBQ-type domain; it reads PIDIAVIKMP…IHGVFDGVVF (195 aa). The Nucleophile role is filled by C326. Residue H432 is part of the active site.

Belongs to the CobB/CobQ family. CobQ subfamily.

The protein operates within cofactor biosynthesis; adenosylcobalamin biosynthesis. Its function is as follows. Catalyzes amidations at positions B, D, E, and G on adenosylcobyrinic A,C-diamide. NH(2) groups are provided by glutamine, and one molecule of ATP is hydrogenolyzed for each amidation. The sequence is that of Cobyric acid synthase from Clostridium botulinum (strain Kyoto / Type A2).